Reading from the N-terminus, the 314-residue chain is Cytochrome b558/566 subunit B (314 aa).

8 consecutive transmembrane segments (helical) span residues 47–67, 76–96, 102–122, 127–147, 155–175, 186–206, 233–253, and 264–284; these read LLLV…LIVS, SLIP…IPNY, LYSL…EGLI, LSIL…ASIL, LFIS…AYVI, YIAI…ENII, HITL…TSLI, and FLII…IYML.

It localises to the cell membrane. The sequence is that of Cytochrome b558/566 subunit B (cbsB) from Saccharolobus solfataricus (strain ATCC 35092 / DSM 1617 / JCM 11322 / P2) (Sulfolobus solfataricus).